The chain runs to 146 residues: Hemoglobin subunit beta (146 aa).

The 145-residue stretch at 2–146 folds into the Globin domain; sequence QWAAEEKQLI…VAHALARKYH (145 aa). Residues H63 and H92 each coordinate heme b.

This sequence belongs to the globin family. In terms of assembly, heterotetramer of two alpha chains and two beta chains. As to expression, red blood cells.

In terms of biological role, involved in oxygen transport from the lung to the various peripheral tissues. This chain is Hemoglobin subunit beta (HBB), found in Accipiter gentilis (Northern goshawk).